A 125-amino-acid polypeptide reads, in one-letter code: MRHYEIVFMVHPDQSEQVPGMIERYTGSVKEAGGQIHRLEDWGRRQLAYPINKLHKAHYVLMNVEAPQEVIDELETTFRYNDAVLRNVIIRTKHAVTEASPMVKAKDERRASAEVENNDFEDAEE.

The segment at Ala99 to Glu125 is disordered. Positions Lys104–Ala113 are enriched in basic and acidic residues. Residues Glu116–Glu125 are compositionally biased toward acidic residues.

The protein belongs to the bacterial ribosomal protein bS6 family.

Binds together with bS18 to 16S ribosomal RNA. The polypeptide is Small ribosomal subunit protein bS6 (Mannheimia succiniciproducens (strain KCTC 0769BP / MBEL55E)).